Here is a 953-residue protein sequence, read N- to C-terminus: Isoleucine--tRNA ligase (953 aa).

The 'HIGH' region signature appears at 58–68 (PYANGSIHIGH). L-isoleucyl-5'-AMP is bound at residue E577. The 'KMSKS' region signature appears at 618–622 (KMSKS). K621 is a binding site for ATP. Residues C916, C919, C936, and C939 each coordinate Zn(2+).

The protein belongs to the class-I aminoacyl-tRNA synthetase family. IleS type 1 subfamily. In terms of assembly, monomer. Zn(2+) serves as cofactor.

It localises to the cytoplasm. It carries out the reaction tRNA(Ile) + L-isoleucine + ATP = L-isoleucyl-tRNA(Ile) + AMP + diphosphate. Catalyzes the attachment of isoleucine to tRNA(Ile). As IleRS can inadvertently accommodate and process structurally similar amino acids such as valine, to avoid such errors it has two additional distinct tRNA(Ile)-dependent editing activities. One activity is designated as 'pretransfer' editing and involves the hydrolysis of activated Val-AMP. The other activity is designated 'posttransfer' editing and involves deacylation of mischarged Val-tRNA(Ile). The sequence is that of Isoleucine--tRNA ligase from Aeromonas salmonicida (strain A449).